The primary structure comprises 302 residues: MRIVFCGTSSFAVPSLELLASEFEIALVITQPDKPAGRGQKLTPPPVKQKALELNLNISQPEKISFLKEELLNIKPDIMIVVAYGQIIPKSMLEIPTFKSLNLHGSVLPKYRGAAPIQRALMQGEKETGNTVILMSSKMDEGDILSVESIPIEQEDNYEKLSNKLSIKGAKLLKDTILSWVSGSIKPIPQNHQEATYAMPILKEELRICFKTSAFSIHNKIRGVYPNAYGVSGDRNIKILKTNIVEKDLNLKPGELFYDGKSLFVGTGDLPLEILEIMSLKGKRVSGKEFAMGYLNQVKKFY.

106–109 serves as a coordination point for (6S)-5,6,7,8-tetrahydrofolate; sequence SVLP.

Belongs to the Fmt family.

It catalyses the reaction L-methionyl-tRNA(fMet) + (6R)-10-formyltetrahydrofolate = N-formyl-L-methionyl-tRNA(fMet) + (6S)-5,6,7,8-tetrahydrofolate + H(+). Attaches a formyl group to the free amino group of methionyl-tRNA(fMet). The formyl group appears to play a dual role in the initiator identity of N-formylmethionyl-tRNA by promoting its recognition by IF2 and preventing the misappropriation of this tRNA by the elongation apparatus. This is Methionyl-tRNA formyltransferase from Hydrogenobaculum sp. (strain Y04AAS1).